An 883-amino-acid chain; its full sequence is MEATAGSETESGGDTVTAECANRIPVPRPPSIEEFTIVKPISRGAFGKVYLGQKGGKLYAVKVVKKADMINKNMTHQVQAERDALALSKSPFIVHLYYSLQSANNVYLVMEYLIGGDVKSLLHIYGYFDEEMAVKYISEVALALDYLHRHGIIHRDLKPDNMLISNEGHIKLTDFGLSKITLNRDIDINMMDILTTPSMAKPRQDYSRTPGQVLSLISSLRFYTPAAEKDKDSANILSTHVFETSQLSQGLICPMSVDHRDTTPYSSKLLHSCLETVTSDPGMPVKCLTSNLLQSRRRLATSSASSQSHTFLSSVESECHSSPRWEKDCQESDDALGSTVMSWNIIEKSSCTKSTDAIETKGFNKKDFELTLSPIHNSSIIPATGSSCVNLAKKCFPGEVSWEARELDINNVNVATDTTRCVFHQSDQWVVDPSDGTEEYCGKRGFKRNSELVDSSPCQNIIQNKKNCIEHKSRNEKSNGYINQRTSLTNEVQDLKLSVCESQQSDCANKENMVNSSIDKQQTPEKSPIPMIAKNLMCELDEDCNKNNKKFLSSSFLGSDDERASKSICMDSDSSFPGISIMESSLERQSLDPDKSIRESSFEESNIEDLLAVSPSWQENPLPKDDENLAVQASSQKMLASSSDVLKTLTLSKRNAVAFRSFNSHINASNNSEPSKMSVTSLDAMDISCVYSGSYPMAITPSQKGISYVPYQQTPNQVKSETPYRTPKSVRRGAAPVDDARILGTPDYLAPELLLGRAHGPAVDWWALGVCLFEFLTGIPPFNDETSQQVFQNILKRDIPWPEGEEKLSDNAQNAVEILLTIDNAKRAGIKELKCHPLFSDVDWENLQHQTMPFIPQPDDETDTSYFEARNNAQHLTVSGFSL.

At M1 the chain carries N-acetylmethionine. A Protein kinase domain is found at F35–F839. ATP-binding positions include I41–V49 and K62. Residue D156 is the Proton acceptor of the active site. Phosphothreonine occurs at positions 209 and 224. A phosphoserine mark is found at S295, S373, and S456. T523 is subject to Phosphothreonine. Phosphoserine occurs at positions 555, 559, 634, 661, and 672. At T726 the chain carries Phosphothreonine. The residue at position 729 (S729) is a Phosphoserine. T745 bears the Phosphothreonine; by CDK1 mark. The AGC-kinase C-terminal domain occupies S840–L883. Residues S879 and S882 each carry the phosphoserine modification.

The protein belongs to the protein kinase superfamily. AGC Ser/Thr protein kinase family. Post-translationally, phosphorylation at Thr-745 by CDK1 during M phase activates its kinase activity. Maximum phosphorylation occurs in prometaphase.

Its subcellular location is the cytoplasm. The protein localises to the cytoskeleton. It is found in the microtubule organizing center. The protein resides in the centrosome. It localises to the nucleus. It catalyses the reaction L-seryl-[protein] + ATP = O-phospho-L-seryl-[protein] + ADP + H(+). The catalysed reaction is L-threonyl-[protein] + ATP = O-phospho-L-threonyl-[protein] + ADP + H(+). Functionally, serine/threonine kinase that plays a key role in M phase by acting as a regulator of mitosis entry and maintenance. Acts by promoting the inactivation of protein phosphatase 2A (PP2A) during M phase: does not directly inhibit PP2A but acts by mediating phosphorylation and subsequent activation of ARPP19 and ENSA at 'Ser-62' and 'Ser-67', respectively. ARPP19 and ENSA are phosphatase inhibitors that specifically inhibit the PPP2R2D (PR55-delta) subunit of PP2A. Inactivation of PP2A during M phase is essential to keep cyclin-B1-CDK1 activity high. Following DNA damage, it is also involved in checkpoint recovery by being inhibited. In Canis lupus familiaris (Dog), this protein is Serine/threonine-protein kinase greatwall (MASTL).